We begin with the raw amino-acid sequence, 326 residues long: Methionyl-tRNA formyltransferase (326 aa).

110–113 contacts (6S)-5,6,7,8-tetrahydrofolate; the sequence is SLLP. Residues 307–326 are disordered; it reads VGTRFSPPEAPQREPAPGEA.

This sequence belongs to the Fmt family.

It catalyses the reaction L-methionyl-tRNA(fMet) + (6R)-10-formyltetrahydrofolate = N-formyl-L-methionyl-tRNA(fMet) + (6S)-5,6,7,8-tetrahydrofolate + H(+). Attaches a formyl group to the free amino group of methionyl-tRNA(fMet). The formyl group appears to play a dual role in the initiator identity of N-formylmethionyl-tRNA by promoting its recognition by IF2 and preventing the misappropriation of this tRNA by the elongation apparatus. This is Methionyl-tRNA formyltransferase from Symbiobacterium thermophilum (strain DSM 24528 / JCM 14929 / IAM 14863 / T).